The chain runs to 84 residues: Putative defensin-like protein 101 (84 aa).

A signal peptide spans 1–27 (MDITKNIVTLLLVVLFPILFYYNNVLA). 4 disulfides stabilise this stretch: cysteine 39–cysteine 81, cysteine 43–cysteine 67, cysteine 52–cysteine 79, and cysteine 56–cysteine 80.

This sequence belongs to the DEFL family.

Its subcellular location is the secreted. The protein is Putative defensin-like protein 101 of Arabidopsis thaliana (Mouse-ear cress).